Reading from the N-terminus, the 209-residue chain is Bcl-2 homologous antagonist/killer (209 aa).

The segment at M1 to D28 is disordered. A2 carries the N-acetylalanine modification. Polar residues predominate over residues P18 to Q27. The BH3 motif lies at V72–R86. The BH1 motif lies at S115–Y134. 2 residues coordinate Zn(2+): D158 and H162. Residues R167–R182 carry the BH2 motif. Residues I186–V203 form a helical membrane-spanning segment.

Belongs to the Bcl-2 family. In terms of assembly, homodimer. Formation of the homodimer is zinc-dependent. Forms heterodimers with BCL2 and BCL2L1 isoform Bcl-X(L). Forms heterooligomers with BAX. Interacts with BCL2A1. Interacts withRTL10/BOP. Interacts with VDAC1. Interacts with GIMAP3/IAN4 and GIMAP5/IAN5. (Microbial infection) Interacts with gamma-herpesvirus 68 protein vBCL2. Widely expressed.

The protein resides in the mitochondrion outer membrane. In terms of biological role, in the presence of an appropriate stimulus, accelerates programmed cell death by binding to, and antagonizing the anti-apoptotic action of BCL2. This chain is Bcl-2 homologous antagonist/killer (Bak1), found in Mus musculus (Mouse).